A 350-amino-acid polypeptide reads, in one-letter code: Ion-translocating oxidoreductase complex subunit D (350 aa).

Helical transmembrane passes span 20–40 (IMLL…WFFG), 42–62 (GTVL…AAIL), 89–109 (IPPL…VVIA), and 123–143 (PAMI…TSWL). Thr187 bears the FMN phosphoryl threonine mark. Transmembrane regions (helical) follow at residues 214–234 (VLAG…GLFL), 242–262 (WHIP…GWLF), 267–287 (LASP…FFIL), 301–321 (LIFG…GGYP), and 322–342 (DGVA…DYYT).

This sequence belongs to the NqrB/RnfD family. In terms of assembly, the complex is composed of six subunits: RnfA, RnfB, RnfC, RnfD, RnfE and RnfG. It depends on FMN as a cofactor.

It is found in the cell inner membrane. Functionally, part of a membrane-bound complex that couples electron transfer with translocation of ions across the membrane. This is Ion-translocating oxidoreductase complex subunit D from Klebsiella pneumoniae (strain 342).